The chain runs to 84 residues: Tripartite terminase subunit 2 (84 aa).

Belongs to the herpesviridae TRM2 protein family. As to quaternary structure, associates with TRM1 and TRM3 to form the tripartite terminase complex.

It localises to the host nucleus. Its function is as follows. Component of the molecular motor that translocates viral genomic DNA in empty capsid during DNA packaging. Forms a tripartite terminase complex together with TRM1 and TRM3 in the host cytoplasm. Once the complex reaches the host nucleus, it interacts with the capsid portal vertex. This portal forms a ring in which genomic DNA is translocated into the capsid. This Alcelaphine herpesvirus 1 (strain C500) (AlHV-1) protein is Tripartite terminase subunit 2.